The following is a 489-amino-acid chain: 5-hydroxytryptamine receptor 3A (489 aa).

Residues 1-23 (MRLCIPQVLLALFLSMLTAPGEG) form the signal peptide. The Extracellular portion of the chain corresponds to 24 to 246 (SRRRATQARD…MKFYVIIRRR (223 aa)). N109, N175, and N191 each carry an N-linked (GlcNAc...) asparagine glycan. The cysteines at positions 162 and 176 are disulfide-linked. Residues 247–273 (PLFYAVSLLLPSIFLMVVDIVGFCLPP) traverse the membrane as a helical segment. Residues 274–278 (DSGER) are Cytoplasmic-facing. A helical membrane pass occupies residues 279 to 297 (VSFKITLLLGYSVFLIIVS). Topologically, residues 298 to 307 (DTLPATAIGT) are extracellular. A helical membrane pass occupies residues 308–326 (PLIGVYFVVCMALLVISLA). The Cytoplasmic portion of the chain corresponds to 327 to 466 (ETIFIVRLVH…GYVLDRLLFR (140 aa)). An HA-stretch; determines single-channel conductance in 5-HT3 receptors region spans residues 425 to 461 (AVRGLLQELSSIRHFLEKRDEMREVARDWLRVGYVLD). Residues 467–486 (IYLLAVLAYSITLVTLWSIW) traverse the membrane as a helical segment. The Extracellular segment spans residues 487 to 489 (HYS).

It belongs to the ligand-gated ion channel (TC 1.A.9) family. 5-hydroxytryptamine receptor (TC 1.A.9.2) subfamily. HTR3A sub-subfamily. Forms homopentameric as well as heteropentameric serotonin-activated cation-selective channel complexes with HTR3B or HTR3C or HTR3D or HTR3E. The homomeric complex is functional but exhibits low conductance with modified voltage dependence, and decreased agonist and antagonist affinity. Heteropentameric complexes display properties which resemble that of neuronal serotonin-activated channels in vivo. Interacts with RIC3. Brain, spinal cord, and heart.

The protein resides in the postsynaptic cell membrane. The protein localises to the cell membrane. It carries out the reaction Na(+)(in) = Na(+)(out). The catalysed reaction is K(+)(in) = K(+)(out). The enzyme catalyses Ca(2+)(in) = Ca(2+)(out). It catalyses the reaction Mg(2+)(in) = Mg(2+)(out). Functionally, forms serotonin (5-hydroxytryptamine/5-HT3)-activated cation-selective channel complexes, which when activated cause fast, depolarizing responses in neurons. In Mus musculus (Mouse), this protein is 5-hydroxytryptamine receptor 3A.